Here is a 278-residue protein sequence, read N- to C-terminus: RsbT co-antagonist protein RsbRD (278 aa).

Residues 160 to 271 (SAPIMPITDG…QSLAKALANK (112 aa)) enclose the STAS domain. At T181 the chain carries Phosphothreonine.

In terms of assembly, probably present in the stressosome with RsbRA, RsbRB, RsbRC and RsbS. In terms of processing, phosphorylated by RsbT.

In terms of biological role, one of 4 functionally non-identical RsbR paralogs, it functions in the environmental signaling branch of the general stress response. Functionally, negative regulator of sigma-B activity. Non-phosphorylated RsbS binds to RsbT, preventing its association with RsbU. Requires any one of RsbRA, RsbRB, RsbRC or RsbRD to sequester RsbT. When RsbS and the RsbR paralog(s) are phosphorylated, they release RsbT, which can then bind and activate RsbU. The chain is RsbT co-antagonist protein RsbRD (rsbRD) from Bacillus subtilis (strain 168).